Reading from the N-terminus, the 124-residue chain is Small ribosomal subunit protein uS12 (124 aa).

3-methylthioaspartic acid is present on aspartate 89. Residues 105 to 124 form a disordered region; the sequence is AGVKDRRQSRSKYGAKRPKA. Residues 113 to 124 show a composition bias toward basic residues; the sequence is SRSKYGAKRPKA.

It belongs to the universal ribosomal protein uS12 family. As to quaternary structure, part of the 30S ribosomal subunit. Contacts proteins S8 and S17. May interact with IF1 in the 30S initiation complex.

With S4 and S5 plays an important role in translational accuracy. In terms of biological role, interacts with and stabilizes bases of the 16S rRNA that are involved in tRNA selection in the A site and with the mRNA backbone. Located at the interface of the 30S and 50S subunits, it traverses the body of the 30S subunit contacting proteins on the other side and probably holding the rRNA structure together. The combined cluster of proteins S8, S12 and S17 appears to hold together the shoulder and platform of the 30S subunit. This Synechococcus elongatus (strain ATCC 33912 / PCC 7942 / FACHB-805) (Anacystis nidulans R2) protein is Small ribosomal subunit protein uS12 (rpsL).